The chain runs to 101 residues: MRFLVGAVLVVVLVACATAFESDAETFKSLVVEERKCHGDGSKGCATKPDDWCCKNTPCKCPAWSSTSECRCAMDCSRRCKGKRALLLPVETHRLLFPEQW.

An N-terminal signal peptide occupies residues 1-19 (MRFLVGAVLVVVLVACATA). A propeptide spanning residues 20-35 (FESDAETFKSLVVEER) is cleaved from the precursor. 4 disulfide bridges follow: cysteine 37/cysteine 54, cysteine 45/cysteine 59, cysteine 53/cysteine 72, and cysteine 61/cysteine 70. Lysine 81 bears the Lysine amide mark. A propeptide spanning residues 85 to 101 (ALLLPVETHRLLFPEQW) is cleaved from the precursor.

Belongs to the neurotoxin 28 (Litx) family. Expressed by the venom gland.

Its subcellular location is the secreted. In terms of biological role, toxin active against insects (S.frugiperda larvae). May act on sodium (Nav) or calcium channels (Cav). The polypeptide is U1-sicaritoxin-Li1a (Loxosceles intermedia (Brown spider)).